The chain runs to 517 residues: Cytochrome P450 monooxygenase bsc11 (517 aa).

Residues 16–33 (ALPLTCTGLIIIFAFYLS) traverse the membrane as a helical segment. Asn-204 is a glycosylation site (N-linked (GlcNAc...) asparagine). Cys-448 contributes to the heme binding site.

Belongs to the cytochrome P450 family. The cofactor is heme.

The protein resides in the membrane. It functions in the pathway mycotoxin biosynthesis. Its function is as follows. Cytochrome P450 monooxygenase; part of the gene cluster that mediates the biosynthesis of the diterpene glucoside brassicicene C. In the first step of the brassicicene C biosynthesis, the bifunctional diterpene synthase bsc8 that possesses both prenyl transferase and terpene cyclase activity, converts isopentenyl diphosphate and dimethylallyl diphosphate into geranylgeranyl diphosphate (GGDP) that is further converted into fusicocca-2,10(14)-diene, the first precursor for brassicicene C. Fusicocca-2,10(14)-diene is then substrate of cytochrome P450 monooxygenase bsc1 for hydroxylation at the C-8 position. Oxidation at C-16 position to aldehyde is then catalyzed by the cytochrome P450 monooyxygenase bsc7, yielding fusicocca-2,10(14)-diene-8-beta,16-diol. Follows the isomerization of the double bond and reduction of aldehyde to alcohol catalyzed by the short-chain dehydrogenase/reductase bsc3 to yield the diol compound fusicocca-1,10(14)-diene-8 beta,16-diol. The next step is the oxidation at the C-3 position of fusicocca-2,10(14)-diene-8-beta,16-diol catalyzed by the alpha-ketoglutarate dependent dioxygenase bsc9, to produce a triol compound. Methylation of the hydroxy group at position 16 is performed by the methyltransferase bsc6. 16-O-methylation is followed by oxidation at the C-13 position to ketone and an alkyl shift of the methyl group leads to brassicicene C. Although the probable acetyltransferase bsc4 is included in the gene cluster, no acetylation reactions are necessary for brassicicene C biosynthesis. However, the fact that brassicicene E, which is a structurally related compound having an acetoxy group at position 12, was previously isolated from another strain of A.brassicicola suggests that the ATCC 96836 strain might also produce a small amount of brassicicene E. In Alternaria brassicicola (Dark leaf spot agent), this protein is Cytochrome P450 monooxygenase bsc11.